Reading from the N-terminus, the 194-residue chain is Xanthine phosphoribosyltransferase (194 aa).

Xanthine-binding residues include L20 and N27. 128 to 132 (ANGQA) contacts 5-phospho-alpha-D-ribose 1-diphosphate. K156 contacts xanthine.

It belongs to the purine/pyrimidine phosphoribosyltransferase family. Xpt subfamily. Homodimer.

The protein resides in the cytoplasm. It catalyses the reaction XMP + diphosphate = xanthine + 5-phospho-alpha-D-ribose 1-diphosphate. The protein operates within purine metabolism; XMP biosynthesis via salvage pathway; XMP from xanthine: step 1/1. Its function is as follows. Converts the preformed base xanthine, a product of nucleic acid breakdown, to xanthosine 5'-monophosphate (XMP), so that it can be reused for RNA or DNA synthesis. The sequence is that of Xanthine phosphoribosyltransferase (xpt) from Bacillus subtilis (strain 168).